The sequence spans 362 residues: MEPLSLTSTPSWNASAASSSSHNWSLVDPVSPMGARAVLVPVLYLLVCTVGLGGNTLVIYVVLRYAKMKTVTNVYILNLAVADVLFMLGLPFLATQNAVSYWPFGSFLCRLVMTLDGINQFTSIFCLMVMSVDRYLAVVHPLRSARWRRPRVAKLASAAVWVFSLLMSLPLLVFADVQEGWGTCNLSWPEPVGLWGAAFITYTSVLGFFGPLLVICLCYLLIVVKVKAAGMRVGSSRRRRSERKVTRMVVVVVLVFVGCWLPFFIVNIVNLAFTLPEEPTSAGLYFFVVVLSYANSCANPLLYGFLSDNFRQSFRKALCLRRGYGVEDADAIEPRPDKSGRPQTTLPTRSCEANGLMQTSRL.

Over residues 1-10 (MEPLSLTSTP) the composition is skewed to polar residues. The interval 1–24 (MEPLSLTSTPSWNASAASSSSHNW) is disordered. Topologically, residues 1 to 35 (MEPLSLTSTPSWNASAASSSSHNWSLVDPVSPMGA) are extracellular. Positions 11–24 (SWNASAASSSSHNW) are enriched in low complexity. N-linked (GlcNAc...) asparagine glycans are attached at residues N13 and N23. A helical transmembrane segment spans residues 36–63 (RAVLVPVLYLLVCTVGLGGNTLVIYVVL). Residues 64–73 (RYAKMKTVTN) are Cytoplasmic-facing. Residues 74 to 99 (VYILNLAVADVLFMLGLPFLATQNAV) traverse the membrane as a helical segment. Topologically, residues 100-110 (SYWPFGSFLCR) are extracellular. A disulfide bridge connects residues C109 and C184. Residues 111-132 (LVMTLDGINQFTSIFCLMVMSV) form a helical membrane-spanning segment. At 133–154 (DRYLAVVHPLRSARWRRPRVAK) the chain is on the cytoplasmic side. The chain crosses the membrane as a helical span at residues 155–175 (LASAAVWVFSLLMSLPLLVFA). Topologically, residues 176-195 (DVQEGWGTCNLSWPEPVGLW) are extracellular. Residue N185 is glycosylated (N-linked (GlcNAc...) asparagine). A helical membrane pass occupies residues 196–220 (GAAFITYTSVLGFFGPLLVICLCYL). Topologically, residues 221 to 246 (LIVVKVKAAGMRVGSSRRRRSERKVT) are cytoplasmic. Residues 247–272 (RMVVVVVLVFVGCWLPFFIVNIVNLA) form a helical membrane-spanning segment. The Extracellular segment spans residues 273-282 (FTLPEEPTSA). Residues 283–307 (GLYFFVVVLSYANSCANPLLYGFLS) traverse the membrane as a helical segment. Topologically, residues 308–362 (DNFRQSFRKALCLRRGYGVEDADAIEPRPDKSGRPQTTLPTRSCEANGLMQTSRL) are cytoplasmic. C319 carries the S-palmitoyl cysteine; by ZDHHC5 lipid modification. Residues 330–362 (DAIEPRPDKSGRPQTTLPTRSCEANGLMQTSRL) are disordered.

The protein belongs to the G-protein coupled receptor 1 family. As to quaternary structure, heterodimer with SSTR2. Heterodimerization with SSTR2 increases cell growth inhibition activity of SSTR2. In terms of processing, palmitoylated at Cys-319 by ZDHHC5, but not ZDHHC8. Palmitoylation creates an additional intracellular loop which is thought to be important for efficient coupling to G-proteins and may target the protein to lipid rafts. As to expression, expressed in adult brain but not in liver, heart, spleen, or kidney.

The protein resides in the cell membrane. Functionally, receptor for somatostatin-28. The activity of this receptor is mediated by G proteins which inhibit adenylyl cyclase. Increases cell growth inhibition activity of SSTR2 following heterodimerization. The chain is Somatostatin receptor type 5 (Sstr5) from Mus musculus (Mouse).